Consider the following 188-residue polypeptide: Pyridoxal 5'-phosphate synthase subunit PdxT (188 aa).

Residue Gly47–Ser49 coordinates L-glutamine. Cys79 serves as the catalytic Nucleophile. L-glutamine is bound by residues Arg105 and Ile134 to Arg135. Active-site charge relay system residues include His170 and Glu172.

This sequence belongs to the glutaminase PdxT/SNO family. In the presence of PdxS, forms a dodecamer of heterodimers. Only shows activity in the heterodimer.

It carries out the reaction aldehydo-D-ribose 5-phosphate + D-glyceraldehyde 3-phosphate + L-glutamine = pyridoxal 5'-phosphate + L-glutamate + phosphate + 3 H2O + H(+). The catalysed reaction is L-glutamine + H2O = L-glutamate + NH4(+). Its pathway is cofactor biosynthesis; pyridoxal 5'-phosphate biosynthesis. Its function is as follows. Catalyzes the hydrolysis of glutamine to glutamate and ammonia as part of the biosynthesis of pyridoxal 5'-phosphate. The resulting ammonia molecule is channeled to the active site of PdxS. This Listeria innocua serovar 6a (strain ATCC BAA-680 / CLIP 11262) protein is Pyridoxal 5'-phosphate synthase subunit PdxT.